A 483-amino-acid chain; its full sequence is Sphingomyelin synthase-related 1 (483 aa).

The next 3 helical transmembrane spans lie at 182 to 202 (LIAF…MVLV), 230 to 250 (FDMC…VLFF), and 261 to 281 (MFSL…ITSL). Residue His330 is part of the active site. A helical transmembrane segment spans residues 349–369 (WTGLHTFTWVLNCFAIFLILA). Active-site residues include His373 and Asp377. The helical transmembrane segment at 376–396 (IDVFIAFYISSRMFLYYHAYA) threads the bilayer. Residues 397 to 483 (YNHAGITATD…NSKNHTKKHN (87 aa)) lie on the Cytoplasmic side of the membrane. Residues 450–461 (EPKITPKSDSSR) are compositionally biased toward basic and acidic residues. The disordered stretch occupies residues 450–483 (EPKITPKSDSSRKRSSVVAAKQNGNSKNHTKKHN).

This sequence belongs to the sphingomyelin synthase family.

The protein resides in the membrane. In Caenorhabditis elegans, this protein is Sphingomyelin synthase-related 1.